A 390-amino-acid chain; its full sequence is S-adenosylmethionine synthase 4 (390 aa).

A Mg(2+)-binding site is contributed by Glu-9. His-15 is an ATP binding site. Glu-43 is a binding site for K(+). Residues Glu-56 and Gln-99 each contribute to the L-methionine site. ATP-binding positions include 167-169, 235-238, Asp-246, 252-253, Ala-269, Lys-273, and Lys-277; these read DGK, SGRF, and RK. Residue Asp-246 participates in L-methionine binding. An L-methionine-binding site is contributed by Lys-277.

The protein belongs to the AdoMet synthase family. As to quaternary structure, homotetramer. It depends on Mn(2+) as a cofactor. Requires Mg(2+) as cofactor. Co(2+) is required as a cofactor. K(+) serves as cofactor. Mostly expressed in flowers, seedpods and roots, and, to a lower extent, in stems and leaves.

The protein resides in the cytoplasm. It catalyses the reaction L-methionine + ATP + H2O = S-adenosyl-L-methionine + phosphate + diphosphate. The protein operates within amino-acid biosynthesis; S-adenosyl-L-methionine biosynthesis; S-adenosyl-L-methionine from L-methionine: step 1/1. In terms of biological role, catalyzes the formation of S-adenosylmethionine from methionine and ATP. The reaction comprises two steps that are both catalyzed by the same enzyme: formation of S-adenosylmethionine (AdoMet) and triphosphate, and subsequent hydrolysis of the triphosphate. This Brassica juncea (Indian mustard) protein is S-adenosylmethionine synthase 4 (MSAMS4).